Consider the following 313-residue polypeptide: Methionyl-tRNA formyltransferase (313 aa).

Position 109–112 (109–112 (SLLP)) interacts with (6S)-5,6,7,8-tetrahydrofolate.

This sequence belongs to the Fmt family.

The enzyme catalyses L-methionyl-tRNA(fMet) + (6R)-10-formyltetrahydrofolate = N-formyl-L-methionyl-tRNA(fMet) + (6S)-5,6,7,8-tetrahydrofolate + H(+). In terms of biological role, attaches a formyl group to the free amino group of methionyl-tRNA(fMet). The formyl group appears to play a dual role in the initiator identity of N-formylmethionyl-tRNA by promoting its recognition by IF2 and preventing the misappropriation of this tRNA by the elongation apparatus. The protein is Methionyl-tRNA formyltransferase of Thermotoga maritima (strain ATCC 43589 / DSM 3109 / JCM 10099 / NBRC 100826 / MSB8).